The primary structure comprises 967 residues: Leucine--tRNA ligase (967 aa).

The short motif at 43–53 (PYLSGHLHVGH) is the 'HIGH' region element. Positions 650–654 (KMSKS) match the 'KMSKS' region motif. ATP is bound at residue Lys653.

The protein belongs to the class-I aminoacyl-tRNA synthetase family.

Its subcellular location is the cytoplasm. The enzyme catalyses tRNA(Leu) + L-leucine + ATP = L-leucyl-tRNA(Leu) + AMP + diphosphate. This is Leucine--tRNA ligase from Pyrococcus abyssi (strain GE5 / Orsay).